Here is a 282-residue protein sequence, read N- to C-terminus: Nucleotide-binding protein in ptsN-ptsO intergenic region (282 aa).

Residue 8-15 (GRSGSGKS) participates in ATP binding. Residue 56–59 (DVRN) participates in GTP binding.

The protein belongs to the RapZ-like family.

Displays ATPase and GTPase activities. This is Nucleotide-binding protein in ptsN-ptsO intergenic region from Shewanella violacea.